A 385-amino-acid chain; its full sequence is MTPPSTGGEATPVLVLMVALGSILLVSASNWLSVYLAIELPTLSLFILVAQKRGSGFSAEAGLKYFVLGALASGLFLFGCALLCGLTGGTSIPCIDLVLNQGRGPALDPSGVITPIGSLLITGALLFKLSAAPFHMWAPDVYDGAPTTTTALLATVPKVGVFSILVSIGPVANVLLIATIFSMVVGALGALNQTKIKRLLAYSGIAHMGFVLWGIEIGTFESVQASLIYMILYVIMSVCAFAMVLALGGLKNLIVEFSGLSRKEPALAITLALTFLSIAGVPPLIGFFSKWWILLSGITYQYYLVSILAVICSVVAGVYYVRIVKIIYFQADSFFLVGLKTLREKKRINFRKSLLIGASFYLMGFMIISPNLLLQLAHWATVGLF.

Transmembrane regions (helical) follow at residues 12–32 (PVLV…SNWL), 34–50 (VYLA…ILVA), 66–86 (FVLG…LCGL), 112–132 (VITP…LSAA), 161–181 (VFSI…ATIF), 200–220 (LAYS…IGTF), 227–247 (LIYM…VLAL), 268–288 (AITL…IGFF), 291–311 (WWIL…LAVI), and 354–374 (LLIG…NLLL).

The protein belongs to the complex I subunit 2 family.

It is found in the mitochondrion inner membrane. The enzyme catalyses a ubiquinone + NADH + 5 H(+)(in) = a ubiquinol + NAD(+) + 4 H(+)(out). Core subunit of the mitochondrial membrane respiratory chain NADH dehydrogenase (Complex I) that is believed to belong to the minimal assembly required for catalysis. Complex I functions in the transfer of electrons from NADH to the respiratory chain. The immediate electron acceptor for the enzyme is believed to be ubiquinone. The sequence is that of NADH-ubiquinone oxidoreductase chain 2 (ND2) from Metridium senile (Brown sea anemone).